A 93-amino-acid polypeptide reads, in one-letter code: U12-lycotoxin-Ls1e (93 aa).

The first 18 residues, 1–18 (MKFAVILLFTLVVLAVAS), serve as a signal peptide directing secretion. Residues 19–38 (ESVEEDTREIDVEEFQEQQR) constitute a propeptide that is removed on maturation.

It belongs to the neurotoxin 31 family. Post-translationally, contains 5 disulfide bonds. Expressed by the venom gland.

It localises to the secreted. The protein is U12-lycotoxin-Ls1e of Lycosa singoriensis (Wolf spider).